A 56-amino-acid chain; its full sequence is Large ribosomal subunit protein bL33 (56 aa).

Positions Met-1–Leu-12 are enriched in basic and acidic residues. The disordered stretch occupies residues Met-1 to Thr-30. A compositionally biased stretch (polar residues) spans Thr-15–Thr-25.

This sequence belongs to the bacterial ribosomal protein bL33 family.

This is Large ribosomal subunit protein bL33 from Ralstonia nicotianae (strain ATCC BAA-1114 / GMI1000) (Ralstonia solanacearum).